The following is a 97-amino-acid chain: Putative pterin-4-alpha-carbinolamine dehydratase (97 aa).

Belongs to the pterin-4-alpha-carbinolamine dehydratase family.

The catalysed reaction is (4aS,6R)-4a-hydroxy-L-erythro-5,6,7,8-tetrahydrobiopterin = (6R)-L-erythro-6,7-dihydrobiopterin + H2O. This chain is Putative pterin-4-alpha-carbinolamine dehydratase, found in Christiangramia forsetii (strain DSM 17595 / CGMCC 1.15422 / KT0803) (Gramella forsetii).